A 214-amino-acid chain; its full sequence is Ribosomal RNA small subunit methyltransferase G (214 aa).

Residues glycine 77, phenylalanine 82, 128-129 (VE), and arginine 143 each bind S-adenosyl-L-methionine.

This sequence belongs to the methyltransferase superfamily. RNA methyltransferase RsmG family.

The protein localises to the cytoplasm. It carries out the reaction guanosine(527) in 16S rRNA + S-adenosyl-L-methionine = N(7)-methylguanosine(527) in 16S rRNA + S-adenosyl-L-homocysteine. In terms of biological role, specifically methylates the N7 position of guanine in position 527 of 16S rRNA. The sequence is that of Ribosomal RNA small subunit methyltransferase G from Nitrosomonas europaea (strain ATCC 19718 / CIP 103999 / KCTC 2705 / NBRC 14298).